The primary structure comprises 325 residues: GMP reductase (325 aa).

The active-site Thioimidate intermediate is Cys174. Residue 203–226 (LIADGGIRTHGDIAKSIRFGATMV) coordinates NADP(+).

Belongs to the IMPDH/GMPR family. GuaC type 2 subfamily.

The catalysed reaction is IMP + NH4(+) + NADP(+) = GMP + NADPH + 2 H(+). Functionally, catalyzes the irreversible NADPH-dependent deamination of GMP to IMP. It functions in the conversion of nucleobase, nucleoside and nucleotide derivatives of G to A nucleotides, and in maintaining the intracellular balance of A and G nucleotides. The sequence is that of GMP reductase from Pediococcus pentosaceus (strain ATCC 25745 / CCUG 21536 / LMG 10740 / 183-1w).